The following is a 1414-amino-acid chain: DNA-directed RNA polymerase subunit beta' (1414 aa).

Zn(2+)-binding residues include Cys70, Cys72, Cys85, and Cys88. Mg(2+)-binding residues include Asp460, Asp462, and Asp464. Cys815, Cys889, Cys896, and Cys899 together coordinate Zn(2+). The segment at 1395–1414 (EAEAQFADVSSTPDSDTDAS) is disordered.

The protein belongs to the RNA polymerase beta' chain family. As to quaternary structure, the RNAP catalytic core consists of 2 alpha, 1 beta, 1 beta' and 1 omega subunit. When a sigma factor is associated with the core the holoenzyme is formed, which can initiate transcription. Mg(2+) serves as cofactor. Zn(2+) is required as a cofactor.

The catalysed reaction is RNA(n) + a ribonucleoside 5'-triphosphate = RNA(n+1) + diphosphate. In terms of biological role, DNA-dependent RNA polymerase catalyzes the transcription of DNA into RNA using the four ribonucleoside triphosphates as substrates. This chain is DNA-directed RNA polymerase subunit beta', found in Janthinobacterium sp. (strain Marseille) (Minibacterium massiliensis).